The sequence spans 140 residues: Endoribonuclease YbeY (140 aa).

Residues His101, His105, and His111 each contribute to the Zn(2+) site.

It belongs to the endoribonuclease YbeY family. The cofactor is Zn(2+).

It is found in the cytoplasm. Functionally, single strand-specific metallo-endoribonuclease involved in late-stage 70S ribosome quality control and in maturation of the 3' terminus of the 16S rRNA. The chain is Endoribonuclease YbeY from Aliarcobacter butzleri (strain RM4018) (Arcobacter butzleri).